The following is a 502-amino-acid chain: Probable cytosol aminopeptidase (502 aa).

Positions 269 and 274 each coordinate Mn(2+). Lys-281 is an active-site residue. Mn(2+)-binding residues include Asp-292, Asp-351, and Glu-353. Arg-355 is a catalytic residue.

This sequence belongs to the peptidase M17 family. Mn(2+) serves as cofactor.

The protein resides in the cytoplasm. The enzyme catalyses Release of an N-terminal amino acid, Xaa-|-Yaa-, in which Xaa is preferably Leu, but may be other amino acids including Pro although not Arg or Lys, and Yaa may be Pro. Amino acid amides and methyl esters are also readily hydrolyzed, but rates on arylamides are exceedingly low.. It catalyses the reaction Release of an N-terminal amino acid, preferentially leucine, but not glutamic or aspartic acids.. Its function is as follows. Presumably involved in the processing and regular turnover of intracellular proteins. Catalyzes the removal of unsubstituted N-terminal amino acids from various peptides. This is Probable cytosol aminopeptidase from Shewanella piezotolerans (strain WP3 / JCM 13877).